Here is an 866-residue protein sequence, read N- to C-terminus: Paramyosin (866 aa).

The nonhelical region stretch occupies residues 1–22; the sequence is MMNHDTESHVKISRTIYRGVSP. Positions 23–839 form a coiled coil; it reads STTRLESRVR…AERTVTVRRV (817 aa). Residues 840 to 866 are nonhelical region; that stretch reads GPGGRAVSVARELSVTSNRGMRATSMM.

Belongs to the paramyosin family. Homodimer.

It localises to the cytoplasm. The protein localises to the myofibril. Paramyosin is a major structural component of many thick filaments isolated from invertebrate muscles. The chain is Paramyosin from Schistosoma japonicum (Blood fluke).